The chain runs to 155 residues: Ribosome maturation factor RimP (155 aa).

This sequence belongs to the RimP family.

The protein localises to the cytoplasm. Required for maturation of 30S ribosomal subunits. This Lachnoclostridium phytofermentans (strain ATCC 700394 / DSM 18823 / ISDg) (Clostridium phytofermentans) protein is Ribosome maturation factor RimP.